Here is a 483-residue protein sequence, read N- to C-terminus: Cobyric acid synthase (483 aa).

The region spanning 244–430 (WLRVIAPVLP…LHGLFDHAEA (187 aa)) is the GATase cobBQ-type domain. Residue C325 is the Nucleophile of the active site. H422 is a catalytic residue.

The protein belongs to the CobB/CobQ family. CobQ subfamily.

The protein operates within cofactor biosynthesis; adenosylcobalamin biosynthesis. Its function is as follows. Catalyzes amidations at positions B, D, E, and G on adenosylcobyrinic A,C-diamide. NH(2) groups are provided by glutamine, and one molecule of ATP is hydrogenolyzed for each amidation. This Methylobacillus flagellatus (strain ATCC 51484 / DSM 6875 / VKM B-1610 / KT) protein is Cobyric acid synthase.